The chain runs to 1379 residues: DNA-directed RNA polymerase subunit beta (1379 aa).

The protein belongs to the RNA polymerase beta chain family. As to quaternary structure, the RNAP catalytic core consists of 2 alpha, 1 beta, 1 beta' and 1 omega subunit. When a sigma factor is associated with the core the holoenzyme is formed, which can initiate transcription.

It catalyses the reaction RNA(n) + a ribonucleoside 5'-triphosphate = RNA(n+1) + diphosphate. Functionally, DNA-dependent RNA polymerase catalyzes the transcription of DNA into RNA using the four ribonucleoside triphosphates as substrates. The sequence is that of DNA-directed RNA polymerase subunit beta from Rhizobium johnstonii (strain DSM 114642 / LMG 32736 / 3841) (Rhizobium leguminosarum bv. viciae).